Reading from the N-terminus, the 463-residue chain is MSNLGKVIQIIGPIIDIKFDSENLPDLFNALEINAGDRKVIAEVEQHIGDDTIRAIAMEDTEGLKRGMEALDTGKSVSVPVGKEVLGRLFNVLGKPIDGAGEFISEESYPIHRSAPSFEEQSVEPEIFETGIKVIDLLAPYQKGGKIGLFGGAGVGKTVLIQELINNIAKEHGGLSVFTGVGERTREGNDLYYEMKESGVLEKTALVFGQMNEPPGARMRVALTGLTMSEYFRDQGQDVLLFIDNIFRFTQAGSEVSALLGRIPSAVGYQPTLATEMGALQERITSTKNGSITSVQAVYVPADDLTDPAPATTFAHLDATTVLSRSITELGIYPAVDPLESSSRMLDPRIIGEEHYEVAIKVKNILERYRELQDIIAILGIDELSEEDKLVVGRARKIQRFLSQPFTVAEQFTGMQGKYVPIKETVRGFKEILEGKHDNIPESAFLFQGTIEDVLKKAQQMEI.

Residue 151–158 participates in ATP binding; the sequence is GGAGVGKT.

It belongs to the ATPase alpha/beta chains family. As to quaternary structure, F-type ATPases have 2 components, CF(1) - the catalytic core - and CF(0) - the membrane proton channel. CF(1) has five subunits: alpha(3), beta(3), gamma(1), delta(1), epsilon(1). CF(0) has three main subunits: a(1), b(2) and c(9-12). The alpha and beta chains form an alternating ring which encloses part of the gamma chain. CF(1) is attached to CF(0) by a central stalk formed by the gamma and epsilon chains, while a peripheral stalk is formed by the delta and b chains.

Its subcellular location is the cell membrane. It catalyses the reaction ATP + H2O + 4 H(+)(in) = ADP + phosphate + 5 H(+)(out). In terms of biological role, produces ATP from ADP in the presence of a proton gradient across the membrane. The catalytic sites are hosted primarily by the beta subunits. This chain is ATP synthase subunit beta, found in Clostridium botulinum (strain Loch Maree / Type A3).